Reading from the N-terminus, the 257-residue chain is uncharacterized protein (257 aa).

Residues 6–26 (IFWLNLAAIIIISIVVSGDMF) form a helical membrane-spanning segment.

The protein belongs to the staphylococcal tandem lipoprotein family.

Its subcellular location is the cell membrane. This is an uncharacterized protein from Staphylococcus aureus (strain NCTC 8325 / PS 47).